Reading from the N-terminus, the 56-residue chain is Large ribosomal subunit protein bL33 (56 aa).

It belongs to the bacterial ribosomal protein bL33 family.

The chain is Large ribosomal subunit protein bL33 from Anaplasma marginale (strain Florida).